The primary structure comprises 670 residues: ATP synthase subunit alpha 2 (670 aa).

Position 180–187 (180–187) interacts with ATP; it reads GDRATGKT. The segment at 527–670 is disordered; it reads AEDAAGDIGG…DAEAEARHKR (144 aa). Residues 543–588 show a composition bias toward basic and acidic residues; that stretch reads ARGDADRDADHGANREVSREVSPEASREVSREVSREVSHEADRDAA. Over residues 589 to 599 the composition is skewed to low complexity; sequence ADAARVAGRAP. Residues 621-639 show a composition bias toward basic and acidic residues; the sequence is ADGDRASASRPRPDARGDA. Residues 640-661 are compositionally biased toward low complexity; sequence ARTAPSPQGGAEVNVNAAANVD.

The protein belongs to the ATPase alpha/beta chains family. In terms of assembly, F-type ATPases have 2 components, CF(1) - the catalytic core - and CF(0) - the membrane proton channel. CF(1) has five subunits: alpha(3), beta(3), gamma(1), delta(1), epsilon(1). CF(0) has three main subunits: a(1), b(2) and c(9-12). The alpha and beta chains form an alternating ring which encloses part of the gamma chain. CF(1) is attached to CF(0) by a central stalk formed by the gamma and epsilon chains, while a peripheral stalk is formed by the delta and b chains.

It localises to the cell inner membrane. The enzyme catalyses ATP + H2O + 4 H(+)(in) = ADP + phosphate + 5 H(+)(out). Its function is as follows. Produces ATP from ADP in the presence of a proton gradient across the membrane. The alpha chain is a regulatory subunit. This Burkholderia pseudomallei (strain 668) protein is ATP synthase subunit alpha 2.